The sequence spans 361 residues: Peptide chain release factor 1 (361 aa).

Gln237 is subject to N5-methylglutamine. Basic and acidic residues predominate over residues 287-297 (KQQKEQSDTRK). The interval 287–307 (KQQKEQSDTRKNLVGSGDRSE) is disordered.

Belongs to the prokaryotic/mitochondrial release factor family. In terms of processing, methylated by PrmC. Methylation increases the termination efficiency of RF1.

The protein localises to the cytoplasm. Its function is as follows. Peptide chain release factor 1 directs the termination of translation in response to the peptide chain termination codons UAG and UAA. The polypeptide is Peptide chain release factor 1 (Francisella philomiragia subsp. philomiragia (strain ATCC 25017 / CCUG 19701 / FSC 153 / O#319-036)).